The following is a 487-amino-acid chain: 1-hydroxycarotenoid 3,4-desaturase (487 aa).

Residues Gly12, Glu31, Lys39, 55–56, Val247, Asn275, Leu431, Gly461, and 468–469 contribute to the FAD site; these read SL and GI.

It belongs to the carotenoid/retinoid oxidoreductase family. As to quaternary structure, monomer.

It catalyses the reaction rhodopin + A = (3E)-3,4-didehydrorhodopin + AH2. The catalysed reaction is 1'-hydroxy-gamma-carotene + A = 1'-hydroxytorulene + AH2. The enzyme catalyses 1-hydroxy-all-trans-1,2-dihydro-neurosporene + A = demethylspheroidene + AH2. It carries out the reaction 1,1'-dihydroxy-1,1',2,2'-tetrahydroneurosporene + A = 1'-hydroxy-demethylspheroidene + AH2. It catalyses the reaction 1,1'-dihydroxy-1,1',2,2'-tetrahydrolycopene + A = 1,1'-dihydroxy-3,4-didehydro-1,2-dihydrolycopene + AH2. The protein operates within carotenoid biosynthesis. Its function is as follows. Catalyzes the introduction of a C-3,4 double bond into 1'-hydroxy-gamma-carotene and rhodopin (1-hydroxylycopene) to yield 1'-hydroxytorulene and (3E)-3,4-didehydrorhodopin, respectively. Can also use 1-hydroxy-all-trans-1,2-dihydro-neurosporene, 1,1'-dihydroxy-1,1',2,2'-tetrahydroneurosporene and 1,1'-dihydroxy-1,1',2,2'-tetrahydrolycopene. Probably involved in the synthesis of myxol, a gamma-carotene derivative. May use FAD as a proton acceptor. This chain is 1-hydroxycarotenoid 3,4-desaturase, found in Nonlabens dokdonensis (strain DSM 17205 / KCTC 12402 / DSW-6) (Donghaeana dokdonensis).